A 387-amino-acid chain; its full sequence is Early growth response protein 3 (387 aa).

The interval 241–283 is disordered; that stretch reads PGFGSLPQPPLTLKPIRPRKYPNRPSKTPLHERPHACPAEGCD. The segment covering 269-283 has biased composition (basic and acidic residues); that stretch reads PLHERPHACPAEGCD. 3 consecutive C2H2-type zinc fingers follow at residues 275-299, 305-327, and 333-355; these read HACPAEGCDRRFSRSDELTRHLRIH, FQCRICMRSFSRSDHLTTHIRTH, and FACEFCGRKFARSDERKRHAKIH. A disordered region spans residues 348–387; that stretch reads RKRHAKIHLKQKEKKAEKGGAPSASSAPPVSLAPVVTTCA. Residues 350–360 show a composition bias toward basic residues; sequence RHAKIHLKQKE. The segment covering 368-387 has biased composition (low complexity); sequence APSASSAPPVSLAPVVTTCA.

Belongs to the EGR C2H2-type zinc-finger protein family.

It localises to the nucleus. In terms of biological role, probable transcription factor involved in muscle spindle development. In Homo sapiens (Human), this protein is Early growth response protein 3 (EGR3).